The sequence spans 139 residues: Transcription antitermination protein NusB (139 aa).

This sequence belongs to the NusB family.

Involved in transcription antitermination. Required for transcription of ribosomal RNA (rRNA) genes. Binds specifically to the boxA antiterminator sequence of the ribosomal RNA (rrn) operons. The sequence is that of Transcription antitermination protein NusB from Natranaerobius thermophilus (strain ATCC BAA-1301 / DSM 18059 / JW/NM-WN-LF).